Here is a 294-residue protein sequence, read N- to C-terminus: Movement protein (294 aa).

In terms of assembly, interacts with nucleoprotein.

Its function is as follows. Transports viral genome to neighboring plant cells directly through plasmosdesmata, without any budding. The movement protein allows efficient cell to cell propagation, by bypassing the host cell wall barrier. Displays an RNA-binding activity. In Rice yellow stunt virus (RYSV), this protein is Movement protein (3).